We begin with the raw amino-acid sequence, 559 residues long: Apolipoprotein N-acyltransferase 2 (559 aa).

The next 6 membrane-spanning stretches (helical) occupy residues 27–47 (LAGS…GFLL), 53–73 (HVAC…SFWL), 86–106 (ASTV…ACIL), 114–134 (ACAF…GILA), 153–173 (IADI…NACV), and 187–207 (VPVF…SLYG). Positions 221 to 507 (LALAIVQQNA…SAVLHVPVYP (287 aa)) constitute a CN hydrolase domain. The active-site Proton acceptor is the Glu288. Lys358 is an active-site residue. The active-site Nucleophile is Cys416. Residues 519-539 (WVIVLCALIFFAEGVRMAVHT) traverse the membrane as a helical segment.

Belongs to the CN hydrolase family. Apolipoprotein N-acyltransferase subfamily.

Its subcellular location is the cell inner membrane. It carries out the reaction N-terminal S-1,2-diacyl-sn-glyceryl-L-cysteinyl-[lipoprotein] + a glycerophospholipid = N-acyl-S-1,2-diacyl-sn-glyceryl-L-cysteinyl-[lipoprotein] + a 2-acyl-sn-glycero-3-phospholipid + H(+). It participates in protein modification; lipoprotein biosynthesis (N-acyl transfer). Functionally, catalyzes the phospholipid dependent N-acylation of the N-terminal cysteine of apolipoprotein, the last step in lipoprotein maturation. In Treponema pallidum (strain Nichols), this protein is Apolipoprotein N-acyltransferase 2.